We begin with the raw amino-acid sequence, 340 residues long: tRNA-specific 2-thiouridylase MnmA (340 aa).

ATP is bound by residues alanine 6–serine 13 and methionine 32. Cysteine 92 (nucleophile) is an active-site residue. Cysteine 92 and cysteine 186 form a disulfide bridge. Glycine 116 serves as a coordination point for ATP. The segment at lysine 134–glutamine 136 is interaction with tRNA. Cysteine 186 acts as the Cysteine persulfide intermediate in catalysis. Residues arginine 288 to tyrosine 289 are interaction with tRNA.

It belongs to the MnmA/TRMU family.

It is found in the cytoplasm. The catalysed reaction is S-sulfanyl-L-cysteinyl-[protein] + uridine(34) in tRNA + AH2 + ATP = 2-thiouridine(34) in tRNA + L-cysteinyl-[protein] + A + AMP + diphosphate + H(+). Functionally, catalyzes the 2-thiolation of uridine at the wobble position (U34) of tRNA, leading to the formation of s(2)U34. This is tRNA-specific 2-thiouridylase MnmA from Campylobacter concisus (strain 13826).